The primary structure comprises 176 residues: 3-hydroxyanthranilate 3,4-dioxygenase (176 aa).

R44 provides a ligand contact to O2. Fe cation contacts are provided by H48, E54, and H92. Substrate is bound at residue E54. The substrate site is built by R96 and E106. Residues C121, C124, C158, and C161 each contribute to the Fe cation site.

The protein belongs to the 3-HAO family. As to quaternary structure, homodimer. Fe(2+) is required as a cofactor.

The enzyme catalyses 3-hydroxyanthranilate + O2 = (2Z,4Z)-2-amino-3-carboxymuconate 6-semialdehyde. Its pathway is cofactor biosynthesis; NAD(+) biosynthesis; quinolinate from L-kynurenine: step 3/3. In terms of biological role, catalyzes the oxidative ring opening of 3-hydroxyanthranilate to 2-amino-3-carboxymuconate semialdehyde, which spontaneously cyclizes to quinolinate. The chain is 3-hydroxyanthranilate 3,4-dioxygenase from Xanthomonas oryzae pv. oryzae (strain MAFF 311018).